The chain runs to 596 residues: Pescadillo homolog (596 aa).

Residues 347–440 enclose the BRCT domain; that stretch reads PTSTLFSEFV…ELVPANLYLP (94 aa). The disordered stretch occupies residues 449–552; sequence SPWGDSVGYD…EEKDLKLIMM (104 aa). Positions 460 to 596 form a coiled coil; the sequence is AAELAEEEAE…TKAKLKKLEN (137 aa). Residues 463–500 show a composition bias toward acidic residues; the sequence is LAEEEAESEEEEEVSDEAEGDEEATLAAEEDEEDEAEA. The segment covering 501–510 has biased composition (basic and acidic residues); it reads EELRAQKELE. Positions 519–529 are enriched in low complexity; the sequence is SEAADSAAPSK.

The protein belongs to the pescadillo family. In terms of assembly, component of the NOP7 complex, composed of ERB1, NOP7 and YTM1. The complex is held together by ERB1, which interacts with NOP7 via its N-terminal domain and with YTM1 via a high-affinity interaction between the seven-bladed beta-propeller domains of the 2 proteins. The NOP7 complex associates with the 66S pre-ribosome.

The protein resides in the nucleus. It localises to the nucleolus. Its subcellular location is the nucleoplasm. Its function is as follows. Component of the NOP7 complex, which is required for maturation of the 25S and 5.8S ribosomal RNAs and formation of the 60S ribosome. The chain is Pescadillo homolog from Eremothecium gossypii (strain ATCC 10895 / CBS 109.51 / FGSC 9923 / NRRL Y-1056) (Yeast).